A 658-amino-acid polypeptide reads, in one-letter code: Carnitine O-palmitoyltransferase 2, mitochondrial (658 aa).

A mitochondrion-targeting transit peptide spans 1–25; that stretch reads MVPRLLLRAWPRGPAVGPGAPSRPL. Topologically, residues 26-178 are mitochondrial matrix; that stretch reads SAGSGPGQYL…GLLEPEVFHL (153 aa). Lys69 bears the N6-succinyllysine mark. Lys79 carries the N6-acetyllysine modification. Lys85 is modified (N6-succinyllysine). The note=Mitochondrial inner membrane intramembrane region spans 179 to 208; that stretch reads NPAKSDTITFKRLIRFVPSSLSWYGAYLVN. The Mitochondrial matrix segment spans residues 209-658; sequence AYPLDMSQYF…DALEGKSIKS (450 aa). Lys239 carries the N6-acetyllysine; alternate modification. Position 239 is an N6-succinyllysine; alternate (Lys239). Position 305 is an N6-acetyllysine (Lys305). The active-site Proton acceptor is the His372. N6-succinyllysine occurs at positions 424 and 439. 452-464 is a CoA binding site; that stretch reads GKEFLKKQKLSPD. (R)-carnitine contacts are provided by Tyr486, Ser488, and Thr499. Residues Lys510 and Lys544 each carry the N6-acetyllysine; alternate modification. An N6-succinyllysine; alternate mark is found at Lys510 and Lys544.

The protein belongs to the carnitine/choline acetyltransferase family.

The protein localises to the mitochondrion inner membrane. It catalyses the reaction (R)-carnitine + hexadecanoyl-CoA = O-hexadecanoyl-(R)-carnitine + CoA. The enzyme catalyses octanoyl-CoA + (R)-carnitine = O-octanoyl-(R)-carnitine + CoA. It carries out the reaction decanoyl-CoA + (R)-carnitine = O-decanoyl-(R)-carnitine + CoA. The catalysed reaction is dodecanoyl-CoA + (R)-carnitine = O-dodecanoyl-R-carnitine + CoA. It catalyses the reaction tetradecanoyl-CoA + (R)-carnitine = O-tetradecanoyl-(R)-carnitine + CoA. The enzyme catalyses (R)-carnitine + octadecanoyl-CoA = O-octadecanoyl-(R)-carnitine + CoA. It carries out the reaction eicosanoyl-CoA + (R)-carnitine = O-eicosanoyl-(R)-carnitine + CoA. The catalysed reaction is (9Z)-tetradecenoyl-CoA + (R)-carnitine = O-(9Z)-tetradecenoyl-(R)-carnitine + CoA. It catalyses the reaction (5Z)-tetradecenoyl-CoA + (R)-carnitine = O-(5Z)-tetradecenoyl-(R)-carnitine + CoA. The enzyme catalyses (R)-carnitine + (9Z)-octadecenoyl-CoA = O-(9Z)-octadecenoyl-(R)-carnitine + CoA. It carries out the reaction 4,8-dimethylnonanoyl-CoA + (R)-carnitine = O-4,8-dimethylnonanoyl-(R)-carnitine + CoA. It functions in the pathway lipid metabolism; fatty acid beta-oxidation. Its activity is regulated as follows. Inhibited by trans-2-hexadecanoyl-CoA. Functionally, involved in the intramitochondrial synthesis of acylcarnitines from accumulated acyl-CoA metabolites. Reconverts acylcarnitines back into the respective acyl-CoA esters that can then undergo beta-oxidation, an essential step for the mitochondrial uptake of long-chain fatty acids and their subsequent beta-oxidation in the mitochondrion. Active with medium (C8-C12) and long-chain (C14-C18) acyl-CoA esters. The sequence is that of Carnitine O-palmitoyltransferase 2, mitochondrial from Homo sapiens (Human).